We begin with the raw amino-acid sequence, 131 residues long: Replicase polyprotein 1ab (131 aa).

The region spanning 1–128 (ITEFSWNKYL…KLLNFGNHFI (128 aa)) is the Nidovirus-type SAM-dependent 2'-O-MTase domain.

Its function is as follows. The replicase polyprotein of coronaviruses is a multifunctional protein: it contains the activities necessary for the transcription of negative stranded RNA, leader RNA, subgenomic mRNAs and progeny virion RNA as well as proteinases responsible for the cleavage of the polyprotein into functional products. This is Replicase polyprotein 1ab (rep) from Sus scrofa (Pig).